Consider the following 2181-residue polypeptide: MRVNTPSLLICGPMISQADAAYLPQVRSSLVHNKDLSYLREAVSELPNLWLRLVREEPSLGEIDVALFLDNLSQWVKGNSTQPTASRDSRNTQWAVLTVLVHIVEYMEYLDNFSSRDEDGCGHLDAHAALLDHLHDGGIQGLCIGLLTALALACAPSHAEIAKYGAVAVRLALCCGAYIDLNEAKSPAKTICVTTRWPGDDGDDKGDIDRKCDEQLQAILDTYPDAYKSVQTDVSTVTITTNEGDVLALLGELEKGGATSKRIDLHGRYHYGGNQAALLKLLQLSKALPMLQFPRGSRLVVPVRNNCSGSIVEDNTALHEMALRCILVENAEWLKTISSSISANTRQAQLLVLGPVNCVPRSLLLRSPQPISLSVSGKADNIYPDQSIAIIGSSCCFPGAENPRQLWEFIRTKQTHGVVDAAGSFDCSFFRKSPREAEYMDPQQRLGLHLAQEALESGGYFSPSSSATKNVGCYLGISSCDYEDNVNSHPPTAYSFTGTARAFASGRISHFFGLTGPSMVIDTACSSSGVAINTACRAIQSGECTMALAGGINLISREARTQENLAAASFLSPTGECRPFDSKANGYRRGEGGGLVLLKKLSSAVADGDVVLGVIAATAVNQSEGNKSITLPSSESQTSLYQRVLESANLKPRHISYVEAHGTGTQKGDPIECQSIRTVFGGTVRPACRQLHVGSIKSNIGHSEAASGIAALLKVLQMLHHRVIPPQANFEELNPAISPLHDDNIEISRHTKPWEERFRAALVNNYGASGTNAAMLVCQPPSIQHRLPLFPNRPCHYPILLTSHSNESLQLYCRNILRFIENQNNVVSDEEVLANTAFHLAQRQDHSLSFRLTFSVSSIEELKLKLQQQSTSQSYKDGPIQKHSAQPVVVVLAGQTGRRVRLSHEIYASSELLQRHLGRCDRALQTMGFASLFPGIFDTEPLEDLVQAHCMLFSLQYSVAMSWIDSGLKIDALVGHSLGQLTALCISGMLSLQDGLKLISGRASLIQSKWGAECGAMLSVDADAETVQNLADSLPAGYKVEIACYNSSQSHVVVGTKAAITAFEKAADLRGVSLRRLAISHGFHSEMIDCILPDYNKLVQGLVLHPPAIAIEPCSQSGHSWANATPEIIARQSREPVYFANAISRLEKRFGSCIWLEAGWGSAGVNMARRALTHGPTRSLSTHSFYPAALGEPDSVKALADTTINLWNAGIRVQFWLYHRSQTGSPAPLELPLHPFMKSEYLLPVVKHSKKAQSEKDGQPIIQEKATLVSLIGKTQNAGVQTVEYSINQNSEEYSVYVRGRTVFEHLLAPVSMYIESATRAFRLLSTHKLVSFSTSASMELKNLKLHAPFGFDLQKSLRMILRKLGEDAWEFRVESHPIHEKERGSVLQATGVITLQEVYSHLAPHRPLLRRLYDRCEELGKDVSASVVQGDFIKKIINSVARYDDRYIGVRSITSKGFETVAHVFEPEIASQFTPTTPFNPLLLDNFLLIAEIQANNLGGVTPDEIYVGNGFDAATAYTNAEDSEPSTKGHWVGLYSFDHQENDGILCDIFIFCAERKILSMTILGAKFQKIAISSLKRALKTINGVPQTSGGRTPSSSITEFISGDDASPCLPIPGADKPIFIREDDFGFMTTSGHMDEENHLIPEYDVISGSSRSTSSSPPSLESRSQAMDTEEITEGAGSALFNLLSNHLNYPKGLSPDTPLGALGLDSLVAIQLQSDIEQMFGKNSQLMDINESSTFSTLFHTIFPQQQTDQFGFVPLHDQTGKDRLESAVPLRLGYSHIKHAAPSFNDSLDRSNTLFIRQVPHAMDALKQNISSTIKAAGFHDFFSDVHPRQRSLVLAYIVHAFRELGCDIRSLEVGDELPSVQFKPKYQNVMNRLFDILGSEGVINVLNKRYLGGLASFPERSAEDMHKAIMNDYPSYHPDHKLLHTTGARLADCISGKVDPLQILFQNATSIKLLEDVYVKSPMFGTGNLLLGEFMNCLFSYNKTPDRLNHIRILEIGAGTGATTQLVVDRLLACNVDFTYTFTDVSAALVASAREKLTSRYGQHQRFDMEFETLNIEKEPPASFAQSYDLVISANCIHATRDLRKSCSNIEKLLRKDGGVLCLLELTRPLEWLDCVFGLLDGWWRFDDHRTYALAGEQDWKTILLQSGFGHVDWTDDGSREAQQLRLITAWR.

Positions 74–180 (QWVKGNSTQP…LALCCGAYID (107 aa)) are N-terminal acylcarrier protein transacylase domain (SAT). The 433-residue stretch at 347 to 779 (QAQLLVLGPV…GTNAAMLVCQ (433 aa)) folds into the Ketosynthase family 3 (KS3) domain. Residues Cys525, His661, and His702 each act as for beta-ketoacyl synthase activity in the active site. Residues 891 to 1193 (VLAGQTGRRV…SFYPAALGEP (303 aa)) form a malonyl-CoA:ACP transacylase (MAT) domain region. Ser977 (for acyl/malonyl transferase activity) is an active-site residue. An N-terminal hotdog fold region spans residues 1269 to 1401 (VSLIGKTQNA…GVITLQEVYS (133 aa)). A PKS/mFAS DH domain is found at 1269-1579 (VSLIGKTQNA…FQKIAISSLK (311 aa)). Residues 1276–1573 (QNAGVQTVEY…TILGAKFQKI (298 aa)) are product template (PT) domain. The interval 1425-1579 (SASVVQGDFI…FQKIAISSLK (155 aa)) is C-terminal hotdog fold. The segment at 1652-1673 (ISGSSRSTSSSPPSLESRSQAM) is disordered. The span at 1653-1670 (SGSSRSTSSSPPSLESRS) shows a compositional bias: low complexity. A Carrier domain is found at 1677–1753 (EITEGAGSAL…TLFHTIFPQQ (77 aa)). Residue Ser1713 is modified to O-(pantetheine 4'-phosphoryl)serine. The segment at 1982 to 2164 (EFMNCLFSYN…QSGFGHVDWT (183 aa)) is methyltransferase (CMeT) domain.

The protein operates within secondary metabolite biosynthesis; terpenoid biosynthesis. Non-reducing polyketide synthase; part of the gene cluster that mediates the biosynthesis of the immunosuppressants subglutinols, meroterpenoids consisting of an alpha-pyrone (4-hydroxy-5,6-dimethyl-2-pyrone) moiety attached to a decalin core fused to a five-membered cyclic ether carrying a prenylside chain. The first step of the pathway is the synthesis of the alpha-pyrone moiety by the polyketide synthase subA via condensation of one acetyl-CoA starter unit with 3 malonyl-CoA units and 2 methylations. The alpha-pyrone is then combined with geranylgeranyl pyrophosphate (GGPP) formed by the GGPP synthase subD through the action of the prenyltransferase subC to yield a linear alpha-pyrone diterpenoid. Subsequent steps in the subglutinol biosynthetic pathway involve the decalin core formation, which is thought to be initiated by the epoxidation of the C10-C11 olefin by the FAD-dependent oxidoreductase subE. The following cyclization cascade would be catalyzed by the terpene cyclase subB. Lastly, the FAD-dependent dehydrogenase subF probably catalyzes the five-membered cyclic ether formation to complete the formation of subglutinol A. Subsequent redox reactions appear to give rise to subglutinol C and D, however, it remains unclear which enzymes are responsible for these transformations. SubD may have secondary function in the conversion of the identified subglutinols to subglutinol analog 45, which seems to be the major product of the cluster. The chain is Non-reducing polyketide synthase subA from Metarhizium robertsii (strain ARSEF 23 / ATCC MYA-3075) (Metarhizium anisopliae (strain ARSEF 23)).